The chain runs to 349 residues: N-acetyl-gamma-glutamyl-phosphate reductase (349 aa).

The active site involves cysteine 149.

The protein belongs to the NAGSA dehydrogenase family. Type 1 subfamily.

The protein localises to the cytoplasm. It catalyses the reaction N-acetyl-L-glutamate 5-semialdehyde + phosphate + NADP(+) = N-acetyl-L-glutamyl 5-phosphate + NADPH + H(+). It functions in the pathway amino-acid biosynthesis; L-arginine biosynthesis; N(2)-acetyl-L-ornithine from L-glutamate: step 3/4. Functionally, catalyzes the NADPH-dependent reduction of N-acetyl-5-glutamyl phosphate to yield N-acetyl-L-glutamate 5-semialdehyde. This is N-acetyl-gamma-glutamyl-phosphate reductase from Acinetobacter baumannii (strain ACICU).